Reading from the N-terminus, the 401-residue chain is Large ribosomal subunit protein uL4B (401 aa).

Over residues 351 to 373 (IKAKEKKPDDGKPKAKKPLDAKT) the composition is skewed to basic and acidic residues. The segment at 351–401 (IKAKEKKPDDGKPKAKKPLDAKTKMIKLAKAKKRQARAEAKTAEAKTAESK) is disordered. Positions 374–385 (KMIKLAKAKKRQ) are enriched in basic residues. Basic and acidic residues predominate over residues 386-401 (ARAEAKTAEAKTAESK).

Belongs to the universal ribosomal protein uL4 family. Component of the large ribosomal subunit.

The protein resides in the cytoplasm. Component of the large ribosomal subunit. The ribosome is a large ribonucleoprotein complex responsible for the synthesis of proteins in the cell. This chain is Large ribosomal subunit protein uL4B (rpl4-b), found in Xenopus laevis (African clawed frog).